We begin with the raw amino-acid sequence, 155 residues long: Large ribosomal subunit protein uL22 (155 aa).

It belongs to the universal ribosomal protein uL22 family. In terms of assembly, part of the 50S ribosomal subunit.

Functionally, this protein binds specifically to 23S rRNA. It makes multiple contacts with different domains of the 23S rRNA in the assembled 50S subunit and ribosome. Its function is as follows. The globular domain of the protein is located near the polypeptide exit tunnel on the outside of the subunit, while an extended beta-hairpin is found that lines the wall of the exit tunnel in the center of the 70S ribosome. This Archaeoglobus fulgidus (strain ATCC 49558 / DSM 4304 / JCM 9628 / NBRC 100126 / VC-16) protein is Large ribosomal subunit protein uL22.